A 636-amino-acid polypeptide reads, in one-letter code: MAKHQFQTEVGQLLHLMTHSLYSNKEIFIRELVSNASDAIDKLNYLRLTDENLKDKYAQWKGEINISFDEKDKSLSIIDNGIGMNEADLIASIGTIAKSGTKSFVEALTGDAKKDSNLIGQFGVGFYSVFMVADKVDVISKKAGEEQAYKWSSTGTGEFDLTPCTKESNGTVIYIKLKDEEAGEFASKYRIKNIVEKYSNHIAYPIFLNYDEEVSEALSEEDEKAGKKPEKKIERKHEQINAATALWMQPKAKLKEQDYNDFYKSISHDSSDPMLTIHTKTEGVNEYTTLFYIPKIAPMDMYRADFQSGVKLYVKRVFITDDEKELLPTYLRFVRGIIDSEDLPLNVSREILQENRILANIKQGSVKKILAEIKKLSKDEEKYAEFVAQYIRPLKEGVYQDYTNKEAILELLRYKSSKTEAGKMTSLEAYKERANSEQKAIYYIVGENEKVLRNSPLLESYKKNDIEVLILDDKEIDEIITPAIGAFKEWEFKDITAIEPPKVEQSEEEKKEVEEKFQDILSKIKDKLGDAVKDVKVTSRLSESPSCVVKDAADAQMAAMAHMFRAMGQAMPESAPILEINPEHEIVKKLNGCADEATIEDVSWILLDQAKLSEGMEITDTVAFAQRLSRITAKAL.

Positions 1-349 (MAKHQFQTEV…SEDLPLNVSR (349 aa)) are a; substrate-binding. Residues 350–562 (EILQENRILA…ADAQMAAMAH (213 aa)) are b. Positions 563–636 (MFRAMGQAMP…RLSRITAKAL (74 aa)) are c.

It belongs to the heat shock protein 90 family. Homodimer.

It localises to the cytoplasm. Molecular chaperone. Has ATPase activity. The protein is Chaperone protein HtpG of Aliarcobacter butzleri (strain RM4018) (Arcobacter butzleri).